Consider the following 258-residue polypeptide: Small ribosomal subunit protein uS15m (258 aa).

A mitochondrion-targeting transit peptide spans 1 to 57 (MLRAAWRALSSVRAQAVTRAPVPALRGGSSASLLSARCGLQPPSLLRAARAYAAVQK). Residues 229–258 (KAAAAAAKKEKNEGVPENPSNAVPEKTQVN) are disordered.

It belongs to the universal ribosomal protein uS15 family. In terms of assembly, component of the mitochondrial ribosome small subunit (28S) which comprises a 12S rRNA and about 30 distinct proteins. Interacts with METTL17.

It localises to the mitochondrion matrix. This Mus musculus (Mouse) protein is Small ribosomal subunit protein uS15m (Mrps15).